The primary structure comprises 733 residues: MNENDNNLENETGFSGRLIVVSNRLPVSIKKESNGKWSCKMSSGGLVAALSGLKSNFIWVGWIGAEIEEDDRKEIKELLWKDYSCIPVFLSEKVANEHYNGFSNGVLWPLFHYLPGDLDYDDRIWNSYVEANEQFSSVVAEILKPNDLVWVHDYHMMLLPEILKQKKPDARIGFFLHIPFPSSEIFRVLPCRKEILLGILNCCLIGFHTYDYARHFLKSCTRIVGLETAPNGVYFKDRFVQVGVFPVGIDPDKFFESLKTTQVQNRIKELKESFEGTKVLIGIDRLDYIKGIPQKLQAIERLFQKYPEWKGKLVLIQVAVPSRQDVEEYQKLKKEVEELVGRINGLYGSIGYSPIHYLFQSVDPSELTALYNISDAALITSIRDGMNLVAQEYIVCQTENNGVLILSEFTGAAQSLSGAVMINPWNTEEVADSIHNSLLMPPEEREEKHQMLLKYVTKHTASHWGLGFVKELNKASSNTDKMVTIQKLDIEKVVDIYKQSKRRLLIFAYDGTLIPYNNVPQLSRPSQELLNSFDILSNDPKTDVYILSGRDKKTLSEWFLGIQIGLSAEYGCFFKLPESTEWEQQVPSMDLSWKETIRPLFKYFTLRTPGSFFEEKEMLFTWHYRNADPIFGSIQARELHLHLDNLPLDVIVGDKTLGVRSYNINPLSSMKKVITDTIPKGLDLILLIGDTHIHPSELPTFDGKIFNISVGKKSVKDSYHLSDPAEVNYLIIN.

The protein in the N-terminal section; belongs to the glycosyltransferase 20 family. This sequence in the C-terminal section; belongs to the trehalose phosphatase family.

The enzyme catalyses D-glucose 6-phosphate + UDP-alpha-D-glucose = alpha,alpha-trehalose 6-phosphate + UDP + H(+). Its function is as follows. Synthesizes trehalose 6-phosphate, the precursor for the production of trehalose, the main carbohydrate storage reserve of the dormant spore. Trehalose accumulates in both prestalk and prespore cells and then is rapidly metabolized during terminal differentiation of stalk cells, while being stored in spores, where it serves as the principal energy and carbon source for germination. This is Alpha,alpha-trehalose-phosphate synthase [UDP-forming] A (tpsA) from Dictyostelium discoideum (Social amoeba).